The following is a 197-amino-acid chain: Imidazoleglycerol-phosphate dehydratase (197 aa).

This sequence belongs to the imidazoleglycerol-phosphate dehydratase family.

The protein resides in the cytoplasm. It carries out the reaction D-erythro-1-(imidazol-4-yl)glycerol 3-phosphate = 3-(imidazol-4-yl)-2-oxopropyl phosphate + H2O. It participates in amino-acid biosynthesis; L-histidine biosynthesis; L-histidine from 5-phospho-alpha-D-ribose 1-diphosphate: step 6/9. This chain is Imidazoleglycerol-phosphate dehydratase, found in Novosphingobium aromaticivorans (strain ATCC 700278 / DSM 12444 / CCUG 56034 / CIP 105152 / NBRC 16084 / F199).